Here is a 434-residue protein sequence, read N- to C-terminus: Glutamyl-tRNA reductase (434 aa).

Substrate contacts are provided by residues 49–52, S114, 119–121, and Q125; these read TCNR and EPQ. Catalysis depends on C50, which acts as the Nucleophile. 199–204 is an NADP(+) binding site; that stretch reads GAGETI.

This sequence belongs to the glutamyl-tRNA reductase family. As to quaternary structure, homodimer.

It catalyses the reaction (S)-4-amino-5-oxopentanoate + tRNA(Glu) + NADP(+) = L-glutamyl-tRNA(Glu) + NADPH + H(+). It functions in the pathway porphyrin-containing compound metabolism; protoporphyrin-IX biosynthesis; 5-aminolevulinate from L-glutamyl-tRNA(Glu): step 1/2. In terms of biological role, catalyzes the NADPH-dependent reduction of glutamyl-tRNA(Glu) to glutamate 1-semialdehyde (GSA). In Pasteurella multocida (strain Pm70), this protein is Glutamyl-tRNA reductase.